We begin with the raw amino-acid sequence, 223 residues long: Arginine kinase (223 aa).

In terms of domain architecture, Phosphagen kinase C-terminal spans 56-222; it reads FVISTRVRLI…LELIKIEKEM (167 aa). ATP contacts are provided by residues 59 to 63 and His-68; that span reads STRVR. Cys-141 contributes to the L-arginine binding site. ATP is bound by residues 150–154 and 175–180; these read RASVH and RGTRGE. Glu-180 is an L-arginine binding site.

It belongs to the ATP:guanido phosphotransferase family.

It catalyses the reaction L-arginine + ATP = N(omega)-phospho-L-arginine + ADP + H(+). This is Arginine kinase from Chionoecetes opilio (Atlantic snow crab).